Reading from the N-terminus, the 238-residue chain is Ribonuclease PH (238 aa).

Residues Arg-86 and 124–126 (GTR) each bind phosphate.

The protein belongs to the RNase PH family. As to quaternary structure, homohexameric ring arranged as a trimer of dimers.

It carries out the reaction tRNA(n+1) + phosphate = tRNA(n) + a ribonucleoside 5'-diphosphate. Phosphorolytic 3'-5' exoribonuclease that plays an important role in tRNA 3'-end maturation. Removes nucleotide residues following the 3'-CCA terminus of tRNAs; can also add nucleotides to the ends of RNA molecules by using nucleoside diphosphates as substrates, but this may not be physiologically important. Probably plays a role in initiation of 16S rRNA degradation (leading to ribosome degradation) during starvation. In Aliivibrio salmonicida (strain LFI1238) (Vibrio salmonicida (strain LFI1238)), this protein is Ribonuclease PH.